A 106-amino-acid chain; its full sequence is ATP-dependent Clp protease adapter protein ClpS (106 aa).

This sequence belongs to the ClpS family. In terms of assembly, binds to the N-terminal domain of the chaperone ClpA.

Functionally, involved in the modulation of the specificity of the ClpAP-mediated ATP-dependent protein degradation. This chain is ATP-dependent Clp protease adapter protein ClpS, found in Escherichia coli O139:H28 (strain E24377A / ETEC).